We begin with the raw amino-acid sequence, 475 residues long: Ribulose bisphosphate carboxylase large chain (475 aa).

Positions Met1–Ser2 are excised as a propeptide. Pro3 is modified (N-acetylproline). Position 14 is an N6,N6,N6-trimethyllysine (Lys14). Substrate-binding residues include Asn123 and Thr173. Catalysis depends on Lys175, which acts as the Proton acceptor. Substrate is bound at residue Lys177. Lys201, Asp203, and Glu204 together coordinate Mg(2+). Lys201 carries the N6-carboxylysine modification. The active-site Proton acceptor is the His294. Substrate-binding residues include Arg295, His327, and Ser379.

The protein belongs to the RuBisCO large chain family. Type I subfamily. In terms of assembly, heterohexadecamer of 8 large chains and 8 small chains; disulfide-linked. The disulfide link is formed within the large subunit homodimers. It depends on Mg(2+) as a cofactor. Post-translationally, the disulfide bond which can form in the large chain dimeric partners within the hexadecamer appears to be associated with oxidative stress and protein turnover.

The protein localises to the plastid. It is found in the chloroplast. The enzyme catalyses 2 (2R)-3-phosphoglycerate + 2 H(+) = D-ribulose 1,5-bisphosphate + CO2 + H2O. It catalyses the reaction D-ribulose 1,5-bisphosphate + O2 = 2-phosphoglycolate + (2R)-3-phosphoglycerate + 2 H(+). Functionally, ruBisCO catalyzes two reactions: the carboxylation of D-ribulose 1,5-bisphosphate, the primary event in carbon dioxide fixation, as well as the oxidative fragmentation of the pentose substrate in the photorespiration process. Both reactions occur simultaneously and in competition at the same active site. The polypeptide is Ribulose bisphosphate carboxylase large chain (Pinus pinea (Italian stone pine)).